The chain runs to 464 residues: Na(+)/H(+) antiporter NhaA 1 (464 aa).

The next 11 helical transmembrane spans lie at 41 to 61, 85 to 105, 121 to 141, 150 to 170, 180 to 200, 207 to 227, 234 to 254, 329 to 349, 363 to 383, 399 to 419, and 428 to 448; these read GGLI…SPLA, LHHW…GLEL, VLPI…YMSL, GWGI…ALLA, FLVA…AVFY, SFLI…MIGI, FFVG…ATLA, VAFF…IDFG, VVFG…WLAI, IIGA…IAEL, and IIQA…AGYL.

Belongs to the NhaA Na(+)/H(+) (TC 2.A.33) antiporter family.

The protein localises to the cell inner membrane. It catalyses the reaction Na(+)(in) + 2 H(+)(out) = Na(+)(out) + 2 H(+)(in). Its function is as follows. Na(+)/H(+) antiporter that extrudes sodium in exchange for external protons. This Saccharophagus degradans (strain 2-40 / ATCC 43961 / DSM 17024) protein is Na(+)/H(+) antiporter NhaA 1.